We begin with the raw amino-acid sequence, 208 residues long: 3-isopropylmalate dehydratase small subunit 2 (208 aa).

The tract at residues 163-208 (EGERLDNASTSAGHGHAGTPLGDDPAKEDGPRPEQASGHQKEEHHA) is disordered.

This sequence belongs to the LeuD family. LeuD type 2 subfamily. Heterodimer of LeuC and LeuD.

It carries out the reaction (2R,3S)-3-isopropylmalate = (2S)-2-isopropylmalate. Its pathway is amino-acid biosynthesis; L-leucine biosynthesis; L-leucine from 3-methyl-2-oxobutanoate: step 2/4. Functionally, catalyzes the isomerization between 2-isopropylmalate and 3-isopropylmalate, via the formation of 2-isopropylmaleate. This chain is 3-isopropylmalate dehydratase small subunit 2 (leuD2), found in Deinococcus radiodurans (strain ATCC 13939 / DSM 20539 / JCM 16871 / CCUG 27074 / LMG 4051 / NBRC 15346 / NCIMB 9279 / VKM B-1422 / R1).